The chain runs to 557 residues: MEAATEFVVESPDVVYSPETIEAQYEYRTTSVSREGGVLKVHPTSTRFTFRTARQVPRLGVMLVGWGGNNGSTLTAAVLANRLRLSWPTRTGRKEANYYGSLTQAGTVSLGLDAEGKEVFVPFSSLLPMVAPDDLVFDGWDISSLNLAEAMRRAQVLDWGLQEQLWPHMEAMRPRPSVYIPEFIAANQSARADNVIPGTRAQQLEQIRRDIRDFRFSAGLDKVIVLWTANTERFCEVIPGLNDTAENLLRTIQLGLEVSPSTLFAVASILEGCAFLNGSPQNTLVPGALELAWQRRVFVGGDDFKSGQTKVKSVLVDFLIGSGLKTMSIVSYNHLGNNDGQNLSAPPQFRSKEVSKSSVVDDMVHSNPVLYSPGEQPDHCVVIKYVPYVGDSKRALDEYTSELMLGGTNTLVLHNTCEDSLLAAPIMLDLALLTELCQRVSFCTDVDPDPQSFHPVLSLLGFLFKAPLAPPGSPVVNALFRQRSCIENILRACVGLPPQNHMLLEHKMERPGLKRVGPLATTSPVLCKKGSAPTAPNGCTGDANGHSQAEAPQMPTT.

Residues G67, G68, N69, N70, D141, S177, V178, Q188, R191, T228, A229, N230, T231, G278, S279, D303, S306, N337, N338, D339, and K352 each contribute to the NAD(+) site. S279 is subject to Phosphoserine. The residue at position 357 (S357) is a Phosphoserine. NAD(+) contacts are provided by G390, D391, D419, and S420. S523 bears the Phosphoserine mark. Residues 527 to 557 form a disordered region; sequence CKKGSAPTAPNGCTGDANGHSQAEAPQMPTT.

The protein belongs to the myo-inositol 1-phosphate synthase family. NAD(+) is required as a cofactor. Expressed in testis (at protein level).

The protein resides in the cytoplasm. The catalysed reaction is D-glucose 6-phosphate = 1D-myo-inositol 3-phosphate. The protein operates within polyol metabolism; myo-inositol biosynthesis; myo-inositol from D-glucose 6-phosphate: step 1/2. In terms of biological role, key enzyme in myo-inositol biosynthesis pathway that catalyzes the conversion of glucose 6-phosphate to 1-myo-inositol 1-phosphate in a NAD-dependent manner. Rate-limiting enzyme in the synthesis of all inositol-containing compounds. The protein is Inositol-3-phosphate synthase 1 (ISYNA1) of Bos taurus (Bovine).